The primary structure comprises 270 residues: Formamidopyrimidine-DNA glycosylase (270 aa).

Pro-2 functions as the Schiff-base intermediate with DNA in the catalytic mechanism. Glu-3 serves as the catalytic Proton donor. Catalysis depends on Lys-58, which acts as the Proton donor; for beta-elimination activity. DNA contacts are provided by His-91, Arg-110, and Lys-151. The FPG-type zinc finger occupies 236 to 270 (LVYGKAGAPCTECNTPLKEIRMNNRSTVYCPRCQR). The Proton donor; for delta-elimination activity role is filled by Arg-260.

The protein belongs to the FPG family. In terms of assembly, monomer. The cofactor is Zn(2+).

It catalyses the reaction Hydrolysis of DNA containing ring-opened 7-methylguanine residues, releasing 2,6-diamino-4-hydroxy-5-(N-methyl)formamidopyrimidine.. The enzyme catalyses 2'-deoxyribonucleotide-(2'-deoxyribose 5'-phosphate)-2'-deoxyribonucleotide-DNA = a 3'-end 2'-deoxyribonucleotide-(2,3-dehydro-2,3-deoxyribose 5'-phosphate)-DNA + a 5'-end 5'-phospho-2'-deoxyribonucleoside-DNA + H(+). Its function is as follows. Involved in base excision repair of DNA damaged by oxidation or by mutagenic agents. Acts as a DNA glycosylase that recognizes and removes damaged bases. Has a preference for oxidized purines, such as 7,8-dihydro-8-oxoguanine (8-oxoG). Has AP (apurinic/apyrimidinic) lyase activity and introduces nicks in the DNA strand. Cleaves the DNA backbone by beta-delta elimination to generate a single-strand break at the site of the removed base with both 3'- and 5'-phosphates. The polypeptide is Formamidopyrimidine-DNA glycosylase (Marinobacter nauticus (strain ATCC 700491 / DSM 11845 / VT8) (Marinobacter aquaeolei)).